The chain runs to 514 residues: Double-stranded RNA-binding protein 6 (514 aa).

2 consecutive DRBM domains span residues 1–70 and 87–155; these read MYKN…ALAR and VYKN…SLRQ. Disordered stretches follow at residues 195 to 268 and 455 to 496; these read NNPH…SRFP and EASQ…KDDH. 3 stretches are compositionally biased toward polar residues: residues 216–225, 249–263, and 473–484; these read FPQSSHSSYS, AASQ…SPNP, and SPDSLPKTQLKT.

Its function is as follows. Binds double-stranded RNA. In Oryza sativa subsp. japonica (Rice), this protein is Double-stranded RNA-binding protein 6 (DRB6).